The sequence spans 101 residues: Large ribosomal subunit protein uL24 (101 aa).

This sequence belongs to the universal ribosomal protein uL24 family. As to quaternary structure, part of the 50S ribosomal subunit.

Its function is as follows. One of two assembly initiator proteins, it binds directly to the 5'-end of the 23S rRNA, where it nucleates assembly of the 50S subunit. In terms of biological role, one of the proteins that surrounds the polypeptide exit tunnel on the outside of the subunit. The polypeptide is Large ribosomal subunit protein uL24 (Streptococcus pyogenes serotype M2 (strain MGAS10270)).